Consider the following 322-residue polypeptide: Beta-ketoacyl-[acyl-carrier-protein] synthase III (322 aa).

Active-site residues include C113 and H249. The interval 250–254 (QANIR) is ACP-binding. N279 is a catalytic residue.

This sequence belongs to the thiolase-like superfamily. FabH family. In terms of assembly, homodimer.

The protein localises to the cytoplasm. It carries out the reaction malonyl-[ACP] + acetyl-CoA + H(+) = 3-oxobutanoyl-[ACP] + CO2 + CoA. It functions in the pathway lipid metabolism; fatty acid biosynthesis. In terms of biological role, catalyzes the condensation reaction of fatty acid synthesis by the addition to an acyl acceptor of two carbons from malonyl-ACP. Catalyzes the first condensation reaction which initiates fatty acid synthesis and may therefore play a role in governing the total rate of fatty acid production. Possesses both acetoacetyl-ACP synthase and acetyl transacylase activities. Its substrate specificity determines the biosynthesis of branched-chain and/or straight-chain of fatty acids. The chain is Beta-ketoacyl-[acyl-carrier-protein] synthase III from Thioalkalivibrio sulfidiphilus (strain HL-EbGR7).